A 183-amino-acid polypeptide reads, in one-letter code: MAQRSGKITLYEGKHFTGRKLEVFGDCDNFQDRGFMNRVNSIRVESGAWVCFDHPDFRGQQFILEHGDYPEFFRWNGHNDHMGSCRPVGMHGEHFRIDIFEGCNFTGQCLEFVEDCPFLQSRGWAKSCVNAIKVYGDGAWVLYEEPNYRGRMYVVERGDFRSFSDWEAHSARVQSLRRVLNFF.

4 consecutive Beta/gamma crystallin 'Greek key' domains span residues 6-46 (GKIT…RVES), 47-89 (GAWV…RPVG), 95-136 (FRID…KVYG), and 138-180 (GAWV…RRVL).

The protein belongs to the beta/gamma-crystallin family. In terms of assembly, monomer. As to expression, detected in the auditory hindbrain where it is highly expressed in the medial nucleus of the trapezoid body, but also present in other nuclei of the superior olivary complex.

In terms of biological role, crystallins are the dominant structural components of the vertebrate eye lens. Also plays an important role for integrity and function of auditory nuclei. In Rattus norvegicus (Rat), this protein is Gamma-crystallin N.